The following is a 581-amino-acid chain: Sabinene synthase 1, chloroplastic (581 aa).

The transit peptide at 1-28 (MPLNSLHNLERKPSKAWSTSCTAPAARL) directs the protein to the chloroplast. 5 residues coordinate (2E)-geranyl diphosphate: arginine 297, aspartate 334, aspartate 338, arginine 475, and aspartate 478. Mg(2+)-binding residues include aspartate 334 and aspartate 338. The short motif at 334–338 (DDVYD) is the DDXXD motif element. Residues aspartate 478, threonine 482, and glutamate 486 each contribute to the Mg(2+) site.

This sequence belongs to the terpene synthase family. Tpsb subfamily. It depends on Mg(2+) as a cofactor. Requires Mn(2+) as cofactor.

Its subcellular location is the plastid. The protein resides in the chloroplast. The catalysed reaction is (2E)-geranyl diphosphate = sabinene + diphosphate. It catalyses the reaction (2E)-geranyl diphosphate = beta-myrcene + diphosphate. The protein operates within secondary metabolite biosynthesis; terpenoid biosynthesis. Monoterpene synthase (TPS) involved in the biosynthesis of monoterpene natural products, components of the chemical defense arsenal. Catalyzes the conversion of (2E)-geranyl diphosphate (GPP) into sabinene, and, as minor products, myrcene. This is Sabinene synthase 1, chloroplastic from Salvia pomifera (Apple sage).